Consider the following 438-residue polypeptide: L-cysteine:1D-myo-inositol 2-amino-2-deoxy-alpha-D-glucopyranoside ligase (438 aa).

Residues 1-27 form a disordered region; the sequence is MKSWSSRPVPELPGTGTAPRVHDTSTG. Cys44 is a binding site for Zn(2+). Residues 44–47, Thr59, and 82–84 contribute to the L-cysteinyl-5'-AMP site; these read CGIT and NVT. The short motif at 46 to 56 is the 'HIGH' region element; the sequence is ITPYDATHMGH. The short motif at 208 to 213 is the 'ERGGDP' region element; that stretch reads DHGGDP. Position 249 (Trp249) interacts with L-cysteinyl-5'-AMP. Zn(2+) is bound at residue Cys253. Residue 271-273 coordinates L-cysteinyl-5'-AMP; that stretch reads GSD. His278 serves as a coordination point for Zn(2+). Val304 is a binding site for L-cysteinyl-5'-AMP. The short motif at 310–314 is the 'KMSKS' region element; sequence KMSKS.

It belongs to the class-I aminoacyl-tRNA synthetase family. MshC subfamily. As to quaternary structure, monomer. The cofactor is Zn(2+).

The enzyme catalyses 1D-myo-inositol 2-amino-2-deoxy-alpha-D-glucopyranoside + L-cysteine + ATP = 1D-myo-inositol 2-(L-cysteinylamino)-2-deoxy-alpha-D-glucopyranoside + AMP + diphosphate + H(+). Catalyzes the ATP-dependent condensation of GlcN-Ins and L-cysteine to form L-Cys-GlcN-Ins. This chain is L-cysteine:1D-myo-inositol 2-amino-2-deoxy-alpha-D-glucopyranoside ligase, found in Kocuria rhizophila (strain ATCC 9341 / DSM 348 / NBRC 103217 / DC2201).